Here is an 88-residue protein sequence, read N- to C-terminus: Apolipoprotein C-I (88 aa).

Residues 1 to 26 (MRLFIALPVLIVVVAMALEGPAPAQA) form the signal peptide.

The protein belongs to the apolipoprotein C1 family.

The protein localises to the secreted. Inhibitor of lipoprotein binding to the low density lipoprotein (LDL) receptor, LDL receptor-related protein, and very low density lipoprotein (VLDL) receptor. Associates with high density lipoproteins (HDL) and the triacylglycerol-rich lipoproteins in the plasma and makes up about 10% of the protein of the VLDL and 2% of that of HDL. Appears to interfere directly with fatty acid uptake and is also the major plasma inhibitor of cholesteryl ester transfer protein (CETP). Modulates the interaction of APOE with beta-migrating VLDL and inhibits binding of beta-VLDL to the LDL receptor-related protein. Binds free fatty acids and reduces their intracellular esterification. The sequence is that of Apolipoprotein C-I (Apoc1) from Grammomys surdaster (African woodland thicket rat).